The sequence spans 141 residues: Large ribosomal subunit protein uL11 (141 aa).

The protein belongs to the universal ribosomal protein uL11 family. Part of the ribosomal stalk of the 50S ribosomal subunit. Interacts with L10 and the large rRNA to form the base of the stalk. L10 forms an elongated spine to which L12 dimers bind in a sequential fashion forming a multimeric L10(L12)X complex. Post-translationally, one or more lysine residues are methylated.

Its function is as follows. Forms part of the ribosomal stalk which helps the ribosome interact with GTP-bound translation factors. This is Large ribosomal subunit protein uL11 from Streptococcus agalactiae serotype III (strain NEM316).